The primary structure comprises 178 residues: Aspartate carbamoyltransferase regulatory chain (178 aa).

Residues 1-15 (MNDREPNQKESKESV) show a composition bias toward basic and acidic residues. A disordered region spans residues 1 to 23 (MNDREPNQKESKESVNDAVPRAR). Zn(2+) contacts are provided by cysteine 133, cysteine 138, cysteine 159, and cysteine 162.

Belongs to the PyrI family. In terms of assembly, contains catalytic and regulatory chains. Requires Zn(2+) as cofactor.

Functionally, involved in allosteric regulation of aspartate carbamoyltransferase. The polypeptide is Aspartate carbamoyltransferase regulatory chain (Haloquadratum walsbyi (strain DSM 16790 / HBSQ001)).